A 198-amino-acid polypeptide reads, in one-letter code: C4b-binding protein beta chain (198 aa).

The signal sequence occupies residues 1–17 (MFFWLMCYLVDVWLISA). A Sushi 1; atypical; lacks a Cys domain is found at 22 to 77 (HCPDPLLVTDEFSSLEPVNVNDTFMFKCNEHCIFKGSNWSQCRENHTRVTHSPVSK). N-linked (GlcNAc...) asparagine glycans are attached at residues N42, N59, and N66. The Sushi 2 domain maps to 79–135 (RDCGPPETPTHGYFEGRDFKSGSTITYYCEARYRLVGTQHQQCIDGEWTSAPPICEL). Cystine bridges form between C81-C121 and C107-C133.

As to quaternary structure, disulfide-linked complex of alpha and beta chains.

It localises to the secreted. In terms of biological role, controls the classical pathway of complement activation. It binds as a cofactor to C3b/C4b inactivator (C3bINA), which then hydrolyzes the complement fragment C4b. It also accelerates the degradation of the C4bC2a complex (C3 convertase) by dissociating the complement fragment C2a. It also interacts with serum amyloid P component. The chain is C4b-binding protein beta chain (C4BPB) from Bos taurus (Bovine).